A 464-amino-acid chain; its full sequence is tRNA-2-methylthio-N(6)-dimethylallyladenosine synthase (464 aa).

The tract at residues 1–25 (MSDLVPLSRKPAPAAGDPAPSPAAP) is disordered. Residues 27-142 (RKVYVHTFGC…LPEMVERARG (116 aa)) form the MTTase N-terminal domain. Positions 36, 72, 105, 180, 184, and 187 each coordinate [4Fe-4S] cluster. The region spanning 166–398 (ARGRATAFVT…LAAQRRIAGE (233 aa)) is the Radical SAM core domain. A TRAM domain is found at 401–464 (AAELGKVVEV…GGSSLSGTLA (64 aa)).

The protein belongs to the methylthiotransferase family. MiaB subfamily. In terms of assembly, monomer. [4Fe-4S] cluster serves as cofactor.

The protein localises to the cytoplasm. It catalyses the reaction N(6)-dimethylallyladenosine(37) in tRNA + (sulfur carrier)-SH + AH2 + 2 S-adenosyl-L-methionine = 2-methylsulfanyl-N(6)-dimethylallyladenosine(37) in tRNA + (sulfur carrier)-H + 5'-deoxyadenosine + L-methionine + A + S-adenosyl-L-homocysteine + 2 H(+). Its function is as follows. Catalyzes the methylthiolation of N6-(dimethylallyl)adenosine (i(6)A), leading to the formation of 2-methylthio-N6-(dimethylallyl)adenosine (ms(2)i(6)A) at position 37 in tRNAs that read codons beginning with uridine. This chain is tRNA-2-methylthio-N(6)-dimethylallyladenosine synthase, found in Anaeromyxobacter dehalogenans (strain 2CP-C).